A 400-amino-acid chain; its full sequence is Probable protein phosphatase 2C 64 (400 aa).

The region spanning 47-355 is the PPM-type phosphatase domain; the sequence is DFSMAVVQAN…DDITVIVVFF (309 aa). Position 75 is a phosphoserine (Ser-75). Mn(2+)-binding residues include Asp-86, Gly-87, Asp-287, and Asp-346.

It belongs to the PP2C family. In terms of assembly, interacts with SAUR19. Mg(2+) is required as a cofactor. Mn(2+) serves as cofactor.

It catalyses the reaction O-phospho-L-seryl-[protein] + H2O = L-seryl-[protein] + phosphate. It carries out the reaction O-phospho-L-threonyl-[protein] + H2O = L-threonyl-[protein] + phosphate. Dephosphorylates and represses plasma membrane H(+)-ATPases (PM H(+)-ATPases, e.g. AHA1 and AHA2), thus influencing negatively plant growth and fitness. This chain is Probable protein phosphatase 2C 64, found in Arabidopsis thaliana (Mouse-ear cress).